Here is a 127-residue protein sequence, read N- to C-terminus: Glycine cleavage system H protein (127 aa).

A Lipoyl-binding domain is found at 24-106 (TATIGITDYA…YAEGWMLKLK (83 aa)). Lysine 65 is subject to N6-lipoyllysine.

The protein belongs to the GcvH family. The glycine cleavage system is composed of four proteins: P, T, L and H. Requires (R)-lipoate as cofactor.

Its function is as follows. The glycine cleavage system catalyzes the degradation of glycine. The H protein shuttles the methylamine group of glycine from the P protein to the T protein. In Opitutus terrae (strain DSM 11246 / JCM 15787 / PB90-1), this protein is Glycine cleavage system H protein.